The primary structure comprises 223 residues: MQYLTQEQAIKLDEELMGKYKYSLVQLMEIAGLAVAQVVTKEYPIEKGNKRVLILCGPGNNGGDGLVCGRYLSLFGYEVTVFYPKQSKNEHLQLLIKQLEIQDIPVVTELSSFEYDAIVDAVFGFSFKGPVRGIFKDIFSHINSLKVPIISVDIPSGWDVEQGYLQDGIQRCDVLISLSAPKLGVKNFKGIHYLGGRFIPLELKDKLHLILPYKENELIVKIN.

Positions 9–211 constitute a YjeF N-terminal domain; sequence AIKLDEELMG…ELKDKLHLIL (203 aa). Position 60 to 64 (60 to 64) interacts with (6S)-NADPHX; that stretch reads NNGGD. Asparagine 61 and aspartate 120 together coordinate K(+). (6S)-NADPHX contacts are provided by residues 124-130 and aspartate 153; that span reads GFSFKGP. Serine 156 contacts K(+).

Belongs to the NnrE/AIBP family. The cofactor is K(+).

It catalyses the reaction (6R)-NADHX = (6S)-NADHX. The enzyme catalyses (6R)-NADPHX = (6S)-NADPHX. In terms of biological role, catalyzes the epimerization of the S- and R-forms of NAD(P)HX, a damaged form of NAD(P)H that is a result of enzymatic or heat-dependent hydration. This is a prerequisite for the S-specific NAD(P)H-hydrate dehydratase to allow the repair of both epimers of NAD(P)HX. This chain is NAD(P)H-hydrate epimerase, found in Entamoeba histolytica (strain ATCC 30459 / HM-1:IMSS / ABRM).